A 152-amino-acid chain; its full sequence is UPF0178 protein YaiI (152 aa).

This sequence belongs to the UPF0178 family.

The sequence is that of UPF0178 protein YaiI from Escherichia coli O17:K52:H18 (strain UMN026 / ExPEC).